The chain runs to 506 residues: ATP synthase subunit alpha, chloroplastic (506 aa).

Residue 172–179 (GDRQTGKT) participates in ATP binding.

This sequence belongs to the ATPase alpha/beta chains family. F-type ATPases have 2 components, CF(1) - the catalytic core - and CF(0) - the membrane proton channel. CF(1) has five subunits: alpha(3), beta(3), gamma(1), delta(1), epsilon(1). CF(0) has four main subunits: a, b, b' and c.

The protein localises to the plastid. It localises to the chloroplast thylakoid membrane. It carries out the reaction ATP + H2O + 4 H(+)(in) = ADP + phosphate + 5 H(+)(out). Produces ATP from ADP in the presence of a proton gradient across the membrane. The alpha chain is a regulatory subunit. The chain is ATP synthase subunit alpha, chloroplastic from Pleurastrum terricola (Filamentous green alga).